We begin with the raw amino-acid sequence, 436 residues long: NAD(P)-dependent benzaldehyde dehydrogenase (436 aa).

NADP(+) is bound by residues 117 to 119 (GPF), 143 to 147 (KPSET), 175 to 178 (RDEN), 193 to 194 (GS), 215 to 216 (EL), Cys-249, and 337 to 339 (ELF). Residues Glu-215 and Cys-249 contribute to the active site.

It belongs to the aldehyde dehydrogenase family.

The catalysed reaction is benzaldehyde + NAD(+) + H2O = benzoate + NADH + 2 H(+). The enzyme catalyses benzaldehyde + NADP(+) + H2O = benzoate + NADPH + 2 H(+). It functions in the pathway aromatic compound metabolism; (R)-mandelate degradation; benzoate from (R)-mandelate: step 4/4. In terms of biological role, NAD or NADP-dependent benzaldehyde dehydrogenase that catalyzes the conversion of benzaldehyde into benzoate in the (R)-mandelate degradation pathway. The sequence is that of NAD(P)-dependent benzaldehyde dehydrogenase (mdlD) from Pseudomonas putida (Arthrobacter siderocapsulatus).